Consider the following 855-residue polypeptide: Beta-mannosidase B (855 aa).

Residue Asn-98 is glycosylated (N-linked (GlcNAc...) asparagine). The Proton donor role is filled by Glu-430. N-linked (GlcNAc...) asparagine glycans are attached at residues Asn-693 and Asn-730.

It belongs to the glycosyl hydrolase 2 family. Beta-mannosidase B subfamily. In terms of assembly, homodimer.

It localises to the secreted. It catalyses the reaction Hydrolysis of terminal, non-reducing beta-D-mannose residues in beta-D-mannosides.. Its pathway is glycan metabolism; N-glycan degradation. Exoglycosidase that cleaves the single beta-linked mannose residue from the non-reducing end of beta-mannosidic oligosaccharides of various complexity and length. Prefers mannobiose over mannotriose. Is also severely restricted by galactosyl substitutions at the +1 subsite. Has no activity against polymeric mannan. This is Beta-mannosidase B (man9) from Thermothelomyces thermophilus (Myceliophthora thermophila).